Here is a 324-residue protein sequence, read N- to C-terminus: Annexin A10 (324 aa).

Annexin repeat units lie at residues 17-88 (FNPM…GLMY), 89-160 (PPPS…NLVQ), 171-243 (AMAA…AIVR), and 247-318 (DKPS…AICA).

Belongs to the annexin family.

The chain is Annexin A10 (Anxa10) from Mus musculus (Mouse).